Consider the following 237-residue polypeptide: Segregation and condensation protein A (237 aa).

It belongs to the ScpA family. As to quaternary structure, component of a cohesin-like complex composed of ScpA, ScpB and the Smc homodimer, in which ScpA and ScpB bind to the head domain of Smc. The presence of the three proteins is required for the association of the complex with DNA.

The protein resides in the cytoplasm. Functionally, participates in chromosomal partition during cell division. May act via the formation of a condensin-like complex containing Smc and ScpB that pull DNA away from mid-cell into both cell halves. This is Segregation and condensation protein A from Streptococcus thermophilus (strain ATCC BAA-250 / LMG 18311).